The following is a 137-amino-acid chain: Small ribosomal subunit protein uS9 (137 aa).

The segment at 118 to 137 is disordered; that stretch reads KERKKYGLRKARKAPQYSKR.

This sequence belongs to the universal ribosomal protein uS9 family.

This Acaryochloris marina (strain MBIC 11017) protein is Small ribosomal subunit protein uS9.